Consider the following 714-residue polypeptide: Fatty acid oxidation complex subunit alpha (714 aa).

The tract at residues 1-190 is enoyl-CoA hydratase; sequence MEMASAFTLN…KLGLVDDVVP (190 aa). Positions 306-714 are 3-hydroxyacyl-CoA dehydrogenase; the sequence is APLNSVGILG…FWKTTATDLQ (409 aa).

The protein in the N-terminal section; belongs to the enoyl-CoA hydratase/isomerase family. This sequence in the central section; belongs to the 3-hydroxyacyl-CoA dehydrogenase family. Heterotetramer of two alpha chains (FadJ) and two beta chains (FadI).

Its subcellular location is the cytoplasm. The enzyme catalyses a (3S)-3-hydroxyacyl-CoA = a (2E)-enoyl-CoA + H2O. The catalysed reaction is a 4-saturated-(3S)-3-hydroxyacyl-CoA = a (3E)-enoyl-CoA + H2O. It catalyses the reaction a (3S)-3-hydroxyacyl-CoA + NAD(+) = a 3-oxoacyl-CoA + NADH + H(+). It carries out the reaction (3S)-3-hydroxybutanoyl-CoA = (3R)-3-hydroxybutanoyl-CoA. The protein operates within lipid metabolism; fatty acid beta-oxidation. Functionally, catalyzes the formation of a hydroxyacyl-CoA by addition of water on enoyl-CoA. Also exhibits 3-hydroxyacyl-CoA epimerase and 3-hydroxyacyl-CoA dehydrogenase activities. The protein is Fatty acid oxidation complex subunit alpha of Escherichia coli O6:H1 (strain CFT073 / ATCC 700928 / UPEC).